A 533-amino-acid polypeptide reads, in one-letter code: Peptide chain release factor 3 (533 aa).

The 276-residue stretch at 9–284 (ARRRTFAIIS…ALCQLSPPPL (276 aa)) folds into the tr-type G domain. GTP is bound by residues 18-25 (SHPDAGKT), 95-99 (DTPGH), and 149-152 (NKLD).

This sequence belongs to the TRAFAC class translation factor GTPase superfamily. Classic translation factor GTPase family. PrfC subfamily.

Its subcellular location is the cytoplasm. Increases the formation of ribosomal termination complexes and stimulates activities of RF-1 and RF-2. It binds guanine nucleotides and has strong preference for UGA stop codons. It may interact directly with the ribosome. The stimulation of RF-1 and RF-2 is significantly reduced by GTP and GDP, but not by GMP. The protein is Peptide chain release factor 3 of Cupriavidus pinatubonensis (strain JMP 134 / LMG 1197) (Cupriavidus necator (strain JMP 134)).